The chain runs to 162 residues: NADH-quinone oxidoreductase subunit I (162 aa).

2 consecutive 4Fe-4S ferredoxin-type domains span residues 54-83 (RRYE…IESE) and 93-122 (TRYD…ETQI). Cysteine 63, cysteine 66, cysteine 69, cysteine 73, cysteine 102, cysteine 105, cysteine 108, and cysteine 112 together coordinate [4Fe-4S] cluster.

Belongs to the complex I 23 kDa subunit family. NDH-1 is composed of 14 different subunits. Subunits NuoA, H, J, K, L, M, N constitute the membrane sector of the complex. The cofactor is [4Fe-4S] cluster.

Its subcellular location is the cell inner membrane. The catalysed reaction is a quinone + NADH + 5 H(+)(in) = a quinol + NAD(+) + 4 H(+)(out). Functionally, NDH-1 shuttles electrons from NADH, via FMN and iron-sulfur (Fe-S) centers, to quinones in the respiratory chain. The immediate electron acceptor for the enzyme in this species is believed to be ubiquinone. Couples the redox reaction to proton translocation (for every two electrons transferred, four hydrogen ions are translocated across the cytoplasmic membrane), and thus conserves the redox energy in a proton gradient. In Burkholderia vietnamiensis (strain G4 / LMG 22486) (Burkholderia cepacia (strain R1808)), this protein is NADH-quinone oxidoreductase subunit I.